The sequence spans 562 residues: Dihydroxy-acid dehydratase (562 aa).

D80 is a Mg(2+) binding site. C121 serves as a coordination point for [2Fe-2S] cluster. Positions 122 and 123 each coordinate Mg(2+). Position 123 is an N6-carboxylysine (K123). C194 contacts [2Fe-2S] cluster. E446 contributes to the Mg(2+) binding site. S472 acts as the Proton acceptor in catalysis.

The protein belongs to the IlvD/Edd family. In terms of assembly, homodimer. [2Fe-2S] cluster is required as a cofactor. The cofactor is Mg(2+).

It catalyses the reaction (2R)-2,3-dihydroxy-3-methylbutanoate = 3-methyl-2-oxobutanoate + H2O. It carries out the reaction (2R,3R)-2,3-dihydroxy-3-methylpentanoate = (S)-3-methyl-2-oxopentanoate + H2O. It participates in amino-acid biosynthesis; L-isoleucine biosynthesis; L-isoleucine from 2-oxobutanoate: step 3/4. Its pathway is amino-acid biosynthesis; L-valine biosynthesis; L-valine from pyruvate: step 3/4. Functionally, functions in the biosynthesis of branched-chain amino acids. Catalyzes the dehydration of (2R,3R)-2,3-dihydroxy-3-methylpentanoate (2,3-dihydroxy-3-methylvalerate) into 2-oxo-3-methylpentanoate (2-oxo-3-methylvalerate) and of (2R)-2,3-dihydroxy-3-methylbutanoate (2,3-dihydroxyisovalerate) into 2-oxo-3-methylbutanoate (2-oxoisovalerate), the penultimate precursor to L-isoleucine and L-valine, respectively. The sequence is that of Dihydroxy-acid dehydratase from Staphylococcus haemolyticus (strain JCSC1435).